The chain runs to 570 residues: Chaperonin GroEL 1 (570 aa).

Residues threonine 42–proline 45, lysine 63, aspartate 99–threonine 103, glycine 427, and aspartate 507 each bind ATP. The interval glutamate 537 to methionine 570 is disordered. A compositionally biased stretch (gly residues) spans glycine 545–methionine 570.

This sequence belongs to the chaperonin (HSP60) family. In terms of assembly, forms a cylinder of 14 subunits composed of two heptameric rings stacked back-to-back. Interacts with the co-chaperonin GroES.

The protein resides in the cytoplasm. It carries out the reaction ATP + H2O + a folded polypeptide = ADP + phosphate + an unfolded polypeptide.. Its function is as follows. Together with its co-chaperonin GroES, plays an essential role in assisting protein folding. The GroEL-GroES system forms a nano-cage that allows encapsulation of the non-native substrate proteins and provides a physical environment optimized to promote and accelerate protein folding. This is Chaperonin GroEL 1 from Salinibacter ruber (strain DSM 13855 / M31).